The chain runs to 424 residues: 26S proteasome regulatory subunit 6A homolog A (424 aa).

A disordered region spans residues 1 to 21 (MATPMVEDTSSFEEDQLASMS). Alanine 2 is modified (N-acetylalanine). Serine 19 is subject to Phosphoserine. ATP is bound at residue 212-219 (GPPGTGKT). A Glycyl lysine isopeptide (Lys-Gly) (interchain with G-Cter in ubiquitin) cross-link involves residue lysine 235. Threonine 278 is subject to O-acetylthreonine. Residues lysine 279 and lysine 416 each participate in a glycyl lysine isopeptide (Lys-Gly) (interchain with G-Cter in ubiquitin) cross-link.

It belongs to the AAA ATPase family. As to quaternary structure, component of the 19S regulatory particle (RP/PA700) base subcomplex of the 26S proteasome. The 26S proteasome is composed of a core protease (CP), known as the 20S proteasome, capped at one or both ends by the 19S regulatory particle (RP/PA700). The RP/PA700 complex is composed of at least 17 different subunits in two subcomplexes, the base and the lid, which form the portions proximal and distal to the 20S proteolytic core, respectively. As to expression, ubiquitous.

It localises to the cytoplasm. The protein localises to the nucleus. In terms of biological role, the 26S proteasome is involved in the ATP-dependent degradation of ubiquitinated proteins. The regulatory (or ATPase) complex confers ATP dependency and substrate specificity to the 26S complex. Interacts with transit peptides of proteins targeted to the chloroplast, and may be involved in the degradation of unimported plastid protein precursors. Plays a essential role in the gametophyte development. Involved in tolerance to zinc deficiency, possibly through alleviation of oxidative stresses or processing of poly-ubiquitinated proteins. This is 26S proteasome regulatory subunit 6A homolog A from Arabidopsis thaliana (Mouse-ear cress).